The chain runs to 578 residues: MSALRVSVDRIHPEGRCAMTEPQRRFGGGGERDARHLTALEEQLGAARTRLAQVSAQNDRLATTLREARDQIVALKAEVDRLGQPPAQFATFLEATGEGTADIVSAGRRMRVAVSPAIDLATLRPGQDVMVNEAMNVVAAFDYERTGELASVKEVLPDGRVLVLARADEERVVRLAGPLLDGPLRVGDSLTVDTRSGFAFERIPKAEVEELVLEEVPDIDYEDIGGLGPQIEAIRDAVELPFLHADLFREHGLRPPKGILLYGPPGCGKTLIAKAVANSLAKKAAELRGESQAKSYFLNIKGPELLNKYVGETERHIRLIFARAREKASGGTPVVVFFDEMESLFRTRGSGVSSDVETTIVPQLLSELDGVERLENVIVIGASNREDMIDPAILRPGRLDVKIKIERPDAESAGQIFAKYLTPDLPLHAEDVAVNGGTKQATVDAMIRATVERMYTETEENEFLEVTYAGGDKEVLYYKDFNSGAMIQNIVDRAKKMAIKDLLTLGQKGVRVDHLMSACVDEFKENEDLPNTTNPDDWARISGKKGERIVFIRTLMQGKKGTEAGRSIDTVANTGQYL.

Residues R35–Q84 adopt a coiled-coil conformation. Residue G266–L271 participates in ATP binding. The segment at Y577–L578 is docks into pockets in the proteasome alpha-ring.

The protein belongs to the AAA ATPase family. In terms of assembly, homohexamer. Assembles into a hexameric ring structure that caps the 20S proteasome core. Strongly interacts with the prokaryotic ubiquitin-like protein Pup through a hydrophobic interface; the interacting region of ARC lies in its N-terminal coiled-coil domain. There is one Pup binding site per ARC hexamer ring. Upon ATP-binding, the C-terminus of ARC interacts with the alpha-rings of the proteasome core, possibly by binding to the intersubunit pockets.

Its pathway is protein degradation; proteasomal Pup-dependent pathway. In terms of biological role, ATPase which is responsible for recognizing, binding, unfolding and translocation of pupylated proteins into the bacterial 20S proteasome core particle. May be essential for opening the gate of the 20S proteasome via an interaction with its C-terminus, thereby allowing substrate entry and access to the site of proteolysis. Thus, the C-termini of the proteasomal ATPase may function like a 'key in a lock' to induce gate opening and therefore regulate proteolysis. The polypeptide is Proteasome-associated ATPase (Kineococcus radiotolerans (strain ATCC BAA-149 / DSM 14245 / SRS30216)).